The primary structure comprises 569 residues: Intraflagellar transport protein 74/72 (569 aa).

Coiled coils occupy residues Ile75 to Glu156, Tyr201 to Asn231, and Ala271 to His298.

This sequence belongs to the IFT74 family.

It localises to the cell projection. The protein resides in the cilium. The protein localises to the flagellum. Its subcellular location is the cytoplasm. It is found in the cytoskeleton. It localises to the flagellum axoneme. The protein resides in the flagellum basal body. Functionally, component of the intraflagellar transport complex B (IFT-B) involved in flagellar assembly. The sequence is that of Intraflagellar transport protein 74/72 from Giardia intestinalis (strain ATCC 50803 / WB clone C6) (Giardia lamblia).